A 403-amino-acid polypeptide reads, in one-letter code: N-isopropylammelide isopropyl amidohydrolase (403 aa).

Zn(2+) is bound by residues H60, H62, and H217. H249 acts as the Proton donor/acceptor in catalysis. Residue D303 coordinates Zn(2+).

The protein belongs to the metallo-dependent hydrolases superfamily. N-acyl-D-amino-acid deacylase family. In terms of assembly, homotetramer. It depends on Zn(2+) as a cofactor.

It is found in the cytoplasm. It carries out the reaction N-isopropylammelide + H2O + H(+) = isopropylamine + cyanurate. The protein operates within xenobiotic degradation; atrazine degradation; cyanurate from atrazine: step 3/3. Its activity is regulated as follows. Inhibited by N-ethylammeline, N-hydroxyethylammeline, N-isopropylammeline, ammeline and 2-amino-4hydroxy-1,3,5-s-triazine. In terms of biological role, transforms N-isopropylammelide to cyanuric acid and isopropylamine. This chain is N-isopropylammelide isopropyl amidohydrolase (atzC), found in Pseudomonas sp. (strain ADP).